The following is a 400-amino-acid chain: Homoserine O-acetyltransferase (400 aa).

Residues 64-374 form the AB hydrolase-1 domain; the sequence is NAILVCHALT…DKGHDAFLLD (311 aa). S169 functions as the Nucleophile in the catalytic mechanism. R239 is a substrate binding site. Residues D335 and H368 contribute to the active site. D369 is a substrate binding site.

This sequence belongs to the AB hydrolase superfamily. MetX family. In terms of assembly, homodimer.

The protein localises to the cytoplasm. It catalyses the reaction L-homoserine + acetyl-CoA = O-acetyl-L-homoserine + CoA. It functions in the pathway amino-acid biosynthesis; L-methionine biosynthesis via de novo pathway; O-acetyl-L-homoserine from L-homoserine: step 1/1. Functionally, transfers an acetyl group from acetyl-CoA to L-homoserine, forming acetyl-L-homoserine. This is Homoserine O-acetyltransferase from Rhodopseudomonas palustris (strain ATCC BAA-98 / CGA009).